Reading from the N-terminus, the 1109-residue chain is DNA-directed RNA polymerase subunit beta (1109 aa).

Belongs to the RNA polymerase beta chain family. In plastids the minimal PEP RNA polymerase catalytic core is composed of four subunits: alpha, beta, beta', and beta''. When a (nuclear-encoded) sigma factor is associated with the core the holoenzyme is formed, which can initiate transcription.

Its subcellular location is the plastid. The protein localises to the chloroplast. The enzyme catalyses RNA(n) + a ribonucleoside 5'-triphosphate = RNA(n+1) + diphosphate. Functionally, DNA-dependent RNA polymerase catalyzes the transcription of DNA into RNA using the four ribonucleoside triphosphates as substrates. This Nephroselmis olivacea (Green alga) protein is DNA-directed RNA polymerase subunit beta.